The sequence spans 185 residues: Elongation factor P (185 aa).

This sequence belongs to the elongation factor P family.

It localises to the cytoplasm. The protein operates within protein biosynthesis; polypeptide chain elongation. Involved in peptide bond synthesis. Stimulates efficient translation and peptide-bond synthesis on native or reconstituted 70S ribosomes in vitro. Probably functions indirectly by altering the affinity of the ribosome for aminoacyl-tRNA, thus increasing their reactivity as acceptors for peptidyl transferase. The polypeptide is Elongation factor P (Staphylococcus aureus (strain Mu3 / ATCC 700698)).